The following is a 335-amino-acid chain: 3-hydroxy-3-methylglutaryl-CoA lyase, cytoplasmic (335 aa).

Glycine 2 is lipidated: N-myristoyl glycine. Positions 43–310 (VKIVEVGPRD…ETGVDLLKVM (268 aa)) constitute a Pyruvate carboxyltransferase domain. A substrate-binding site is contributed by arginine 51. Residue aspartate 52 participates in a divalent metal cation binding. Lysine 58 carries the post-translational modification N6-acetyllysine. The a divalent metal cation site is built by histidine 243 and histidine 245. Cysteine 276 is an active-site residue. Asparagine 285 provides a ligand contact to a divalent metal cation.

It belongs to the HMG-CoA lyase family. A divalent metal cation is required as a cofactor.

The protein resides in the cytoplasm. Its subcellular location is the cytosol. It localises to the endoplasmic reticulum membrane. It catalyses the reaction (3S)-3-hydroxy-3-methylglutaryl-CoA = acetoacetate + acetyl-CoA. Its pathway is metabolic intermediate metabolism; (S)-3-hydroxy-3-methylglutaryl-CoA degradation; acetoacetate from (S)-3-hydroxy-3-methylglutaryl-CoA: step 1/1. In terms of biological role, non-mitochondrial 3-hydroxy-3-methylglutaryl-CoA lyase that catalyzes a cation-dependent cleavage of (S)-3-hydroxy-3-methylglutaryl-CoA into acetyl-CoA and acetoacetate, a key step in ketogenesis, the products of which support energy production in nonhepatic animal tissues. The sequence is that of 3-hydroxy-3-methylglutaryl-CoA lyase, cytoplasmic (hmgcll1) from Danio rerio (Zebrafish).